The chain runs to 245 residues: Chlorophyll a-b binding protein 1B-21, chloroplastic (245 aa).

A chloroplast-targeting transit peptide spans 1–44 (MASSSGLRSCSAVGVPSLLAPSSRSGRSGLPFCAYATTSGRVTM). Chlorophyll b is bound at residue Trp-48. Chlorophyll a-binding residues include Phe-68, Glu-87, and His-90. Chlorophyll b is bound at residue Arg-92. Residues 93–113 (WAMLCVPGVLVPEALGLGNWV) traverse the membrane as a helical segment. Leu-129 is a binding site for chlorophyll a. A helical membrane pass occupies residues 132–152 (PVPWGNLPTILAIEFLAIAFA). Val-133, Glu-153, and Arg-156 together coordinate chlorophyll b. Positions 190, 191, 194, 196, 208, and 224 each coordinate chlorophyll a.

Belongs to the light-harvesting chlorophyll a/b-binding (LHC) protein family. In terms of assembly, the LHC complex consists of chlorophyll a-b binding proteins. Requires Binds at least 14 chlorophylls (8 Chl-a and 6 Chl-b) and carotenoids such as lutein and neoxanthin. as cofactor. Post-translationally, photoregulated by reversible phosphorylation of its threonine residues.

The protein resides in the plastid. It is found in the chloroplast thylakoid membrane. The light-harvesting complex (LHC) functions as a light receptor, it captures and delivers excitation energy to photosystems with which it is closely associated. This Hordeum vulgare (Barley) protein is Chlorophyll a-b binding protein 1B-21, chloroplastic (LHC Ib-21).